Consider the following 1346-residue polypeptide: Adhesion G protein-coupled receptor F5 (1346 aa).

A signal peptide spans 1-21; the sequence is MKSPRRTTLCLMFIVIYSSKA. The Extracellular segment spans residues 22 to 1006; it reads ALNWNYESTI…MSPDSPDPSS (985 aa). N-linked (GlcNAc...) asparagine glycans are attached at residues asparagine 73, asparagine 94, asparagine 106, asparagine 188, asparagine 256, asparagine 272, asparagine 301, asparagine 315, asparagine 328, asparagine 398, asparagine 472, asparagine 487, asparagine 505, asparagine 540, asparagine 627, asparagine 649, asparagine 666, asparagine 820, asparagine 931, asparagine 963, and asparagine 982. Positions 166–273 constitute an SEA domain; the sequence is LQEDVTLNMR…NSFQAVTINE (108 aa). Ig-like domains are found at residues 267–368, 369–466, and 471–561; these read QAVT…IDVM, PIQI…IKVT, and ANLT…KDVI. 2 cysteine pairs are disulfide-bonded: cysteine 293–cysteine 350 and cysteine 391–cysteine 449. Cysteine 492 and cysteine 545 are oxidised to a cystine. A GAIN-B domain is found at 842 to 1003; it reads PPLSFSQTNV…SILMSPDSPD (162 aa). Intrachain disulfides connect cysteine 954–cysteine 985 and cysteine 973–cysteine 987. Positions 954-1003 are GPS; it reads CVFWNFRLANNTGGWDSSGCYVEEGDGDNVTCICDHLTSFSILMSPDSPD. The tethered agonist stretch occupies residues 991–1006; the sequence is TSFSILMSPDSPDPSS. Residues 1007 to 1027 traverse the membrane as a helical segment; sequence LLGILLDIISYVGVGFSILSL. The Cytoplasmic portion of the chain corresponds to 1028–1053; sequence AACLVVEAVVWKSVTKNRTSYMRHTC. The chain crosses the membrane as a helical span at residues 1054 to 1074; it reads IVNIAASLLVANTWFIVVAAI. Over 1075–1090 the chain is Extracellular; the sequence is QDNRYILCKTACVAAT. The chain crosses the membrane as a helical span at residues 1091 to 1111; sequence FFIHFFYLSVFFWMLTLGLML. At 1112 to 1128 the chain is on the cytoplasmic side; it reads FYRLVFILHETSRSTQK. Residues 1129 to 1149 traverse the membrane as a helical segment; sequence AIAFCLGYGCPLAISVITLGA. The Extracellular portion of the chain corresponds to 1150–1173; it reads TQPREVYTRKNVCWLNWEDTKALL. A helical membrane pass occupies residues 1174-1194; sequence AFAIPALIIVVVNITITIVVI. Over 1195-1220 the chain is Cytoplasmic; sequence TKILRPSIGDKPCKQEKSSLFQISKS. Residues 1221 to 1241 form a helical membrane-spanning segment; the sequence is IGVLTPLLGLTWGFGLTTVFP. The Extracellular portion of the chain corresponds to 1242–1244; that stretch reads GTN. Residues 1245–1265 traverse the membrane as a helical segment; sequence LVFHIIFAILNVFQGLFILLF. Residues 1266-1346 are Cytoplasmic-facing; that stretch reads GCLWDLKVQE…NSSSASSLLN (81 aa). Threonine 1300 is modified (phosphothreonine). Serine 1307 bears the Phosphoserine mark. The interval 1327 to 1346 is disordered; the sequence is TPEATSSSLENSSSASSLLN. Residues 1329–1346 show a composition bias toward low complexity; that stretch reads EATSSSLENSSSASSLLN.

It belongs to the G-protein coupled receptor 2 family. Adhesion G-protein coupled receptor (ADGR) subfamily. In terms of assembly, homodimer; disulfide-linked. Heterodimer of 2 chains generated by proteolytic processing; the large extracellular N-terminal fragment and the membrane-bound C-terminal fragment predominantly remain associated and non-covalently linked. Fragment generates by the processing enzyme furin remains attached to the extracellular N-terminal fragment. Interacts (via N-terminal extracellular domain) with SFTPD. Highly glycosylated. In terms of processing, proteolytically cleaved at multiple sites: one in the GPS region of the GAIN-B domain (S1 site) and the other in the SEA domain (S2 site). The proteolytic cleavage at S1 site generates an extracellular subunit and a seven-transmembrane subunit. The proteolytic cleavage at S2 site generates a fragment that undergoes proteolytic cleavage by the processing enzyme furin. Expressed in lung endothelial cells and in alveolar type II (ATII) cells (at protein level). Expressed high levels in subcutaneous adipose tissue in lean individuals and at lower levels in visceral fat. Expression levels in subcutaneous adipose tissue drastically drop in obese individuals.

It is found in the cell membrane. As an adhesion G protein-coupled receptor (aGPCR) exhibits a large N-terminal extracellular domain containing highly conserved GPCR autoproteolysis-inducing (GAIN) domain. During synthesis, intracellular autoproteolytic processing of nascent chain within the GAIN domain generates a mature protein, consisting of an N-terminal fragment that is non-covalently linked to the C-terminal fragment. The mature protein is routed to the plasma membrane where the N- and C-terminal fragments remain associated, forming the holoreceptor. Dissociation of the aGPCR fragments stimulates G protein signaling through the action of the tethered-peptide agonist stalk that is occluded within the GAIN domain in the holoreceptor form. This dissociation might be induced by ligand binding, such as that of sFNDC4. In terms of biological role, adhesion G protein-coupled receptor. In alveolar type II (ATII or AT2) cells, required for normal lung surfactant homeostasis. Modulation of both surfactant secretion and uptake by ATII cells is mediated by the downstream activation of GNAQ/GNA11 proteins and may be a consequence of increased cortical F-actin assembly induced by ADGRF5 activation. In the kidney, may play a role in the regulation of acid excretion into the primary urine, possibly by regulating the surface expression of V-ATPase proton pump. As a receptor for soluble FNDC4 (sFNDC4), required for proper systemic glucose tolerance, specifically sensitizing white adipose tissue to insulin. Also plays a role in sFNDC4-induced decrease of local inflammation in white adipose tissue. This Homo sapiens (Human) protein is Adhesion G protein-coupled receptor F5.